Here is a 294-residue protein sequence, read N- to C-terminus: ATP synthase gamma chain (294 aa).

The protein belongs to the ATPase gamma chain family. F-type ATPases have 2 components, CF(1) - the catalytic core - and CF(0) - the membrane proton channel. CF(1) has five subunits: alpha(3), beta(3), gamma(1), delta(1), epsilon(1). CF(0) has three main subunits: a, b and c.

It is found in the cell inner membrane. Its function is as follows. Produces ATP from ADP in the presence of a proton gradient across the membrane. The gamma chain is believed to be important in regulating ATPase activity and the flow of protons through the CF(0) complex. This is ATP synthase gamma chain from Campylobacter jejuni (strain RM1221).